Here is a 570-residue protein sequence, read N- to C-terminus: Peptidyl-prolyl cis-trans isomerase-like 2 (570 aa).

Positions 37–110 (KRLPFNFCSL…GDYVDPVTYK (74 aa)) constitute a U-box domain. Disordered regions lie at residues 215–253 (RSERAQRADSSAVTKKADGSTTTSTQSKTASFQSGKPTP), 428–449 (STTLNNLETHPVNSSTNRPTPD), and 469–570 (KKAE…SSWD). The segment covering 234 to 248 (STTTSTQSKTASFQS) has biased composition (low complexity). Residues 298–457 (QKGYARISTT…PDIRITDVTI (160 aa)) enclose the PPIase cyclophilin-type domain. A compositionally biased stretch (polar residues) spans 428–446 (STTLNNLETHPVNSSTNRP). Basic and acidic residues predominate over residues 469-483 (KKAEEASGKNKKVDP). 2 stretches are compositionally biased toward acidic residues: residues 484-497 (TEEDRETQQEDDDQ) and 535-550 (QEEDEIVEFVDEEPEP).

The protein belongs to the cyclophilin-type PPIase family. PPIL2 subfamily.

The protein localises to the nucleus. The enzyme catalyses [protein]-peptidylproline (omega=180) = [protein]-peptidylproline (omega=0). It catalyses the reaction S-ubiquitinyl-[E2 ubiquitin-conjugating enzyme]-L-cysteine + [acceptor protein]-L-lysine = [E2 ubiquitin-conjugating enzyme]-L-cysteine + N(6)-ubiquitinyl-[acceptor protein]-L-lysine.. Functionally, may catalyze the cis-trans isomerization of proline imidic peptide bonds in oligopeptides thereby assisting the folding of proteins. May also function as a chaperone, playing a role in intracellular transport of proteins. May also have a protein ubiquitin ligase activity acting as an E3 ubiquitin protein ligase or as a ubiquitin-ubiquitin ligase promoting elongation of ubiquitin chains on proteins. The protein is Peptidyl-prolyl cis-trans isomerase-like 2 (cyp8) of Aspergillus oryzae (strain ATCC 42149 / RIB 40) (Yellow koji mold).